The sequence spans 348 residues: MNTRKIQMPREVYIGPDVIYETGEICKDLHLDNKVLVLTGPNTYDIAAKHAIESLENQDIEVDVKIVEKVSYDSVEEVSEMITSGTNVLGVGGGKVIDVAKLASYDKNVFFVSMPTTASHDGIVSPLASIKNPKTSTSAKAHAPIAVIADSKIIANSPFRLLSAGCADLISNFTAIKDWQLAHRLKNESYSESAASLSIMSAKMITDNVDSIKPGLEESARLVVKTLFSSGMAISIAGSSRPASGSEHTFSHALDKILDKPCLHGEQCGVGTILMMYLYGGDWKFIRDSLKAVGAPTSAKELGISDENVIDALTMAHTIRPERYTILGDNGISEDAAYELALKTGVIK.

NAD(+) contacts are provided by residues 94 to 98 (GKVID) and 116 to 119 (TTAS). D121 lines the substrate pocket. S125 is an NAD(+) binding site. A substrate-binding site is contributed by D168. Residues D168 and H248 each contribute to the Zn(2+) site. H252 serves as a coordination point for substrate. H264 is a Zn(2+) binding site.

This sequence belongs to the glycerol-1-phosphate dehydrogenase family. Homooctamer. Requires Zn(2+) as cofactor.

It localises to the cytoplasm. The catalysed reaction is sn-glycerol 1-phosphate + NAD(+) = dihydroxyacetone phosphate + NADH + H(+). It carries out the reaction sn-glycerol 1-phosphate + NADP(+) = dihydroxyacetone phosphate + NADPH + H(+). It participates in membrane lipid metabolism; glycerophospholipid metabolism. Its function is as follows. Catalyzes the NAD(P)H-dependent reduction of dihydroxyacetonephosphate (DHAP or glycerone phosphate) to glycerol 1-phosphate (G1P). The G1P thus generated is used as the glycerophosphate backbone of phospholipids in the cellular membranes of Archaea. The sequence is that of Glycerol-1-phosphate dehydrogenase [NAD(P)+] from Methanobrevibacter smithii (strain ATCC 35061 / DSM 861 / OCM 144 / PS).